The following is a 506-amino-acid chain: Histidine ammonia-lyase (506 aa).

The 5-imidazolinone (Ala-Gly) cross-link spans Ala142 to Gly144. Ser143 carries the 2,3-didehydroalanine (Ser) modification.

The protein belongs to the PAL/histidase family. In terms of processing, contains an active site 4-methylidene-imidazol-5-one (MIO), which is formed autocatalytically by cyclization and dehydration of residues Ala-Ser-Gly.

The protein localises to the cytoplasm. The catalysed reaction is L-histidine = trans-urocanate + NH4(+). Its pathway is amino-acid degradation; L-histidine degradation into L-glutamate; N-formimidoyl-L-glutamate from L-histidine: step 1/3. This is Histidine ammonia-lyase from Bacillus cereus (strain ATCC 14579 / DSM 31 / CCUG 7414 / JCM 2152 / NBRC 15305 / NCIMB 9373 / NCTC 2599 / NRRL B-3711).